The primary structure comprises 1081 residues: MAPRKRNSRGVSFIFCCFRSSEHPEITYRLRNDSNFALQSMEPALPVPPVEELDAMFAELVDELDLSEKHREAMFALSAEKKWQIYCSKKKDHEEGATSWPEFYIDQLNSMAARRTLFAMDKEDEEERNKTIESLKTALRTKPMRFVTRFIDLDGLTCILNFLKSMDYEIAESQIHTSLIGCIKALMNNSQGRAHVLAHTESINVIAQSLATENIKTKVAVLEIMGAVCLVPGGHKKVLEAMLHYQRYASERTRFQTLINDLDRSTGRYRDEVSLKTAIMSFINAVLSQGAGVESLDFRLHLRYEFLMLGIQPVIDKLREHENSTLDRHLDFFEMLRNEDELEFAKRFDLVHIDTKSATQMFELIRKRLTHTESYPHFTSILHHCLQMPYKRSGNTVHYWLLLDRIVQQIVIQNEKGQDPDTSPLENFNVKNVVRMLVNENEVKQWKEQAEKMRKEHNELQQKLEKKERECDAKTQEKEEMMQTLNKMKEKLEKETTEYKNVKQQVAELTAQIQELNSRTVCAPGPGGPPPPPGAPGGPMSMPSGNFMPPPPPPPPPFPGGMAPPPPPPPPPPPPPGGPPPPPGLPLLGAAPPGAPLGLSMKKKNIPQPKNPLKSFNWSKLPDNKLEGTLWIDLDDAKVLKILDLEDIERTFSAYQRQQDFFVNNGIKQKEMDCTDDTLSSKMKVKELSVVDGRRAQNCNILLSRLKLTNEEIKRAILTMDEQEDLPKDMLEQLLKFVPEKSDIDLLEEHKHELDRMAKADRFLFEMSRINHYQQRLQSLYFKKKFAERVAEVKPKVEAIRDASKEVLQSKNLKQLLEVVLAFGNYMNKGQRGNAYGFKISSLNKIADTKSSIDKNITLLHYLITVVEKKYPKIVNLHEELQTISVAAKVNMTELEKEISALRNGLKSVENELEYQKTQPTLPGDKFVSVVSQFITVAGFSFCDVEDLLSEAKELFVKSAKRFGEETNKIQPDEFFGIFDQFLQAFLEAKQENENIRKRKEEEERRIRMEAQLKEQRERERKARKAKENGEEEGEFDDLVSALRSGEVFDKDLSKLKRNRKRIVSQTTESSRERPVTKLNY.

The 374-residue stretch at 45–418 (LPVPPVEELD…QIVIQNEKGQ (374 aa)) folds into the GBD/FH3 domain. Disordered stretches follow at residues 455–476 (KEHN…AKTQ) and 519–615 (RTVC…PLKS). Residues 526–536 (PGGPPPPPGAP) are compositionally biased toward pro residues. Over residues 538 to 547 (GPMSMPSGNF) the composition is skewed to low complexity. Residues 548–585 (MPPPPPPPPPFPGGMAPPPPPPPPPPPPPGGPPPPPGL) show a composition bias toward pro residues. Positions 586-600 (PLLGAAPPGAPLGLS) are enriched in low complexity. Residues 603 to 1012 (KKNIPQPKNP…EERRIRMEAQ (410 aa)) enclose the FH2 domain. The actin-binding stretch occupies residues 696–705 (AQNCNILLSR). Basic and acidic residues predominate over residues 1013 to 1029 (LKEQRERERKARKAKEN). Disordered regions lie at residues 1013-1038 (LKEQ…EFDD) and 1060-1081 (RKRI…KLNY). Residues 1030–1061 (GEEEGEFDDLVSALRSGEVFDKDLSKLKRNRK) enclose the DAD domain. Over residues 1070–1081 (SSRERPVTKLNY) the composition is skewed to basic and acidic residues.

It localises to the cytoplasm. The protein localises to the cytoskeleton. It is found in the cilium basal body. Its function is as follows. Binds to disheveled (dsh) and Rho, and mediates Wnt-induced dsh-Rho complex formation during gastrulation. May play a role as a scaffolding protein to recruit Rho-GDP and Rho-GEF, thereby enhancing Rho-GTP formation. Can direct nucleation and elongation of new actin filaments. Involved in building functional cilia. Involved in building functional cilia. Involved in the organization of the subapical actin network in multiciliated epithelial cells. This chain is Disheveled-associated activator of morphogenesis 1-A (daam1-a), found in Xenopus laevis (African clawed frog).